A 224-amino-acid chain; its full sequence is Urease accessory protein UreF (224 aa).

It belongs to the UreF family. In terms of assembly, ureD, UreF and UreG form a complex that acts as a GTP-hydrolysis-dependent molecular chaperone, activating the urease apoprotein by helping to assemble the nickel containing metallocenter of UreC. The UreE protein probably delivers the nickel.

The protein resides in the cytoplasm. Functionally, required for maturation of urease via the functional incorporation of the urease nickel metallocenter. This is Urease accessory protein UreF from Methylorubrum populi (strain ATCC BAA-705 / NCIMB 13946 / BJ001) (Methylobacterium populi).